A 284-amino-acid chain; its full sequence is Tropomyosin (284 aa).

Residues 1–284 (MDAIKKKMVA…DATFAELAGY (284 aa)) adopt a coiled-coil conformation. Over residues 32-41 (TEEAKAKIED) the composition is skewed to basic and acidic residues. A disordered region spans residues 32–60 (TEEAKAKIEDDYNSLQKKSIQTENDLDNT). The span at 44-60 (NSLQKKSIQTENDLDNT) shows a compositional bias: polar residues.

This sequence belongs to the tropomyosin family. In terms of assembly, homodimer.

In terms of biological role, tropomyosin, in association with the troponin complex, plays a central role in the calcium dependent regulation of muscle contraction. This Mytilus edulis (Blue mussel) protein is Tropomyosin.